Reading from the N-terminus, the 465-residue chain is UDP-N-acetylmuramoylalanine--D-glutamate ligase (465 aa).

Residue 116-122 (GTNGKTT) participates in ATP binding.

Belongs to the MurCDEF family.

Its subcellular location is the cytoplasm. The enzyme catalyses UDP-N-acetyl-alpha-D-muramoyl-L-alanine + D-glutamate + ATP = UDP-N-acetyl-alpha-D-muramoyl-L-alanyl-D-glutamate + ADP + phosphate + H(+). It participates in cell wall biogenesis; peptidoglycan biosynthesis. In terms of biological role, cell wall formation. Catalyzes the addition of glutamate to the nucleotide precursor UDP-N-acetylmuramoyl-L-alanine (UMA). This is UDP-N-acetylmuramoylalanine--D-glutamate ligase from Thermobifida fusca (strain YX).